An 86-amino-acid polypeptide reads, in one-letter code: Cytochrome c oxidase subunit 12, mitochondrial (86 aa).

The CHCH domain maps to 30-73 (TKHCFQSYIDYFRCIKAKGEDFVPCKQFWHAYQSLCPMEWVERW). The Cx9C motif motif lies at 33 to 43 (CFQSYIDYFRC). 2 disulfide bridges follow: Cys-33–Cys-65 and Cys-43–Cys-54. Residues 54 to 65 (CKQFWHAYQSLC) carry the Cx10C motif motif.

It belongs to the cytochrome c oxidase subunit 6B family. As to quaternary structure, component of the cytochrome c oxidase (complex IV, CIV), a multisubunit enzyme composed of a catalytic core of 3 subunits and several supernumerary subunits. The complex exists as a monomer or a dimer and forms supercomplexes (SCs) in the inner mitochondrial membrane with ubiquinol-cytochrome c oxidoreductase (cytochrome b-c1 complex, complex III, CIII).

The protein resides in the mitochondrion inner membrane. It functions in the pathway energy metabolism; oxidative phosphorylation. In terms of biological role, component of the cytochrome c oxidase, the last enzyme in the mitochondrial electron transport chain which drives oxidative phosphorylation. The respiratory chain contains 3 multisubunit complexes succinate dehydrogenase (complex II, CII), ubiquinol-cytochrome c oxidoreductase (cytochrome b-c1 complex, complex III, CIII) and cytochrome c oxidase (complex IV, CIV), that cooperate to transfer electrons derived from NADH and succinate to molecular oxygen, creating an electrochemical gradient over the inner membrane that drives transmembrane transport and the ATP synthase. Cytochrome c oxidase is the component of the respiratory chain that catalyzes the reduction of oxygen to water. Electrons originating from reduced cytochrome c in the intermembrane space (IMS) are transferred via the dinuclear copper A center (CU(A)) of subunit 2 and heme A of subunit 1 to the active site in subunit 1, a binuclear center (BNC) formed by heme A3 and copper B (CU(B)). The BNC reduces molecular oxygen to 2 water molecules using 4 electrons from cytochrome c in the IMS and 4 protons from the mitochondrial matrix. This is Cytochrome c oxidase subunit 12, mitochondrial (cox12) from Schizosaccharomyces pombe (strain 972 / ATCC 24843) (Fission yeast).